A 74-amino-acid polypeptide reads, in one-letter code: MVMLTCHLNDGDTWLFLWLFTAFVVAVLGLLLLHYRAVHGTEKTKCAKCKSNRNTTVDYVYMSHGDNGDYVYMN.

This is Probable protein E5B from Homo sapiens (Human).